Reading from the N-terminus, the 141-residue chain is Hemoglobin subunit alpha-D (141 aa).

The 141-residue stretch at 1–141 folds into the Globin domain; the sequence is MLTAEDKKLI…VAAVLAEKYR (141 aa). 2 residues coordinate heme b: histidine 58 and histidine 87.

It belongs to the globin family. As to quaternary structure, heterotetramer of two alpha-D chains and two beta chains. In terms of tissue distribution, red blood cells.

Its function is as follows. Involved in oxygen transport from the lung to the various peripheral tissues. The polypeptide is Hemoglobin subunit alpha-D (HBAD) (Accipiter gentilis (Northern goshawk)).